Consider the following 291-residue polypeptide: Protein-export membrane protein SecF (291 aa).

6 consecutive transmembrane segments (helical) span residues 19-39 (LVVI…SWYV), 134-154 (LALG…FLMF), 156-176 (VFVP…ISVA), 187-209 (LGTV…LLNN), 226-246 (MRTG…MAAV), and 256-278 (AAIG…LLNL).

Belongs to the SecD/SecF family. SecF subfamily. Part of the protein translocation apparatus. Forms a complex with SecD.

The protein localises to the cell membrane. Involved in protein export. This chain is Protein-export membrane protein SecF, found in Haloquadratum walsbyi (strain DSM 16790 / HBSQ001).